Here is a 278-residue protein sequence, read N- to C-terminus: Phosphoenolpyruvate carboxylase kinase 2 (278 aa).

In terms of domain architecture, Protein kinase spans 11 to 269; it reads YQLCDEIGRG…AEDALRHSWM (259 aa). Residues 17 to 25 and lysine 40 each bind ATP; that span reads IGRGRFGTI. Aspartate 137 functions as the Proton acceptor in the catalytic mechanism.

This sequence belongs to the protein kinase superfamily. Ser/Thr protein kinase family. As to expression, expressed in flowers and roots, and at lower levels in cauline leaves. Barely detectable in rosette leaves and stems.

It carries out the reaction L-seryl-[protein] + ATP = O-phospho-L-seryl-[protein] + ADP + H(+). The catalysed reaction is L-threonyl-[protein] + ATP = O-phospho-L-threonyl-[protein] + ADP + H(+). In terms of biological role, calcium-independent kinase involved in light-dependent phosphoenolpyruvate carboxylase phosphorylation. The chain is Phosphoenolpyruvate carboxylase kinase 2 (PPCK2) from Arabidopsis thaliana (Mouse-ear cress).